Here is a 217-residue protein sequence, read N- to C-terminus: Ras-related protein RABA5b (217 aa).

Position 19–26 (19–26 (GDSAVGKS)) interacts with GTP. The short motif at 41-49 (SKATIGVEF) is the Effector region element. GTP-binding positions include 67–71 (DTAGQ), 125–128 (NKCD), and 155–156 (SA). S-geranylgeranyl cysteine attachment occurs at residues Cys214 and Cys215.

Belongs to the small GTPase superfamily. Rab family.

It is found in the cell membrane. Intracellular vesicle trafficking and protein transport. The polypeptide is Ras-related protein RABA5b (RABA5B) (Arabidopsis thaliana (Mouse-ear cress)).